Here is a 325-residue protein sequence, read N- to C-terminus: Transcription initiation factor IIB (325 aa).

A TFIIB-type zinc finger spans residues 19 to 52; the sequence is NKLWCMVCRIQDPDIIEDYAKGDLICRGCGVVVG. Residues Cys-23, Cys-26, Cys-44, and Cys-47 each contribute to the Zn(2+) site. 2 tandem repeats follow at residues 131–207 and 227–303.

This sequence belongs to the TFIIB family.

Its subcellular location is the nucleus. Its function is as follows. General transcription factor that plays a role in transcription initiation by RNA polymerase II (Pol II). Involved in the pre-initiation complex (PIC) formation and Pol II recruitment at promoter DNA. In Dictyostelium discoideum (Social amoeba), this protein is Transcription initiation factor IIB (gtf2b).